The primary structure comprises 457 residues: tRNA modification GTPase MnmE (457 aa).

3 residues coordinate (6S)-5-formyl-5,6,7,8-tetrahydrofolate: arginine 23, glutamate 85, and arginine 124. A TrmE-type G domain is found at 220–376 (GALVVLAGQV…LVTAIRAAVL (157 aa)). Asparagine 230 provides a ligand contact to K(+). GTP-binding positions include 230–235 (NAGKSS), 249–255 (TDLPGTT), and 274–277 (DTAG). Position 234 (serine 234) interacts with Mg(2+). K(+)-binding residues include threonine 249, leucine 251, and threonine 254. Threonine 255 contributes to the Mg(2+) binding site. Lysine 457 provides a ligand contact to (6S)-5-formyl-5,6,7,8-tetrahydrofolate.

It belongs to the TRAFAC class TrmE-Era-EngA-EngB-Septin-like GTPase superfamily. TrmE GTPase family. As to quaternary structure, homodimer. Heterotetramer of two MnmE and two MnmG subunits. K(+) is required as a cofactor.

Its subcellular location is the cytoplasm. Functionally, exhibits a very high intrinsic GTPase hydrolysis rate. Involved in the addition of a carboxymethylaminomethyl (cmnm) group at the wobble position (U34) of certain tRNAs, forming tRNA-cmnm(5)s(2)U34. The sequence is that of tRNA modification GTPase MnmE from Nitratidesulfovibrio vulgaris (strain DP4) (Desulfovibrio vulgaris).